Reading from the N-terminus, the 1217-residue chain is ATP-dependent helicase/nuclease subunit A (1217 aa).

Residues Val-10–Arg-475 enclose the UvrD-like helicase ATP-binding domain. Ala-31 to Thr-38 serves as a coordination point for ATP. Residues Lys-476–Gly-786 enclose the UvrD-like helicase C-terminal domain.

This sequence belongs to the helicase family. AddA subfamily. As to quaternary structure, heterodimer of AddA and AddB/RexB. Mg(2+) serves as cofactor.

The enzyme catalyses Couples ATP hydrolysis with the unwinding of duplex DNA by translocating in the 3'-5' direction.. The catalysed reaction is ATP + H2O = ADP + phosphate + H(+). The heterodimer acts as both an ATP-dependent DNA helicase and an ATP-dependent, dual-direction single-stranded exonuclease. Recognizes the chi site generating a DNA molecule suitable for the initiation of homologous recombination. The AddA nuclease domain is required for chi fragment generation; this subunit has the helicase and 3' -&gt; 5' nuclease activities. This chain is ATP-dependent helicase/nuclease subunit A, found in Staphylococcus aureus (strain MRSA252).